The chain runs to 103 residues: Histone H4 (103 aa).

Residues 1–14 (MSGRGKGGKGLGKG) show a composition bias toward gly residues. The segment at 1–20 (MSGRGKGGKGLGKGGAKRHR) is disordered. The residue at position 6 (lysine 6) is an N6-acetyl-N6-methyllysine; alternate. An N6-methyllysine; alternate mark is found at lysine 6, lysine 9, and lysine 13. Lysine 13 bears the N6-acetyl-N6-methyllysine; alternate mark. Residues 17–21 (KRHRK) mediate DNA binding. Position 92 is an N6-glutaryllysine (lysine 92).

The protein belongs to the histone H4 family. In terms of assembly, the nucleosome is a histone octamer containing two molecules each of H2A, H2B, H3 and H4 assembled in one H3-H4 heterotetramer and two H2A-H2B heterodimers. The octamer wraps approximately 147 bp of DNA. Glutarylation at Lys-92 (H4K91glu) destabilizes nucleosomes by promoting dissociation of the H2A-H2B dimers from nucleosomes.

Its subcellular location is the nucleus. The protein resides in the chromosome. Its function is as follows. Core component of nucleosome. Nucleosomes wrap and compact DNA into chromatin, limiting DNA accessibility to the cellular machineries which require DNA as a template. Histones thereby play a central role in transcription regulation, DNA repair, DNA replication and chromosomal stability. DNA accessibility is regulated via a complex set of post-translational modifications of histones, also called histone code, and nucleosome remodeling. The sequence is that of Histone H4 (HHF1) from Candida glabrata (strain ATCC 2001 / BCRC 20586 / JCM 3761 / NBRC 0622 / NRRL Y-65 / CBS 138) (Yeast).